The sequence spans 246 residues: Complement C1q tumor necrosis factor-related protein 3 (246 aa).

The first 22 residues, 1–22, serve as a signal peptide directing secretion; the sequence is MLWRQLIYWQLLALFFLPFCLC. The region spanning 51 to 113 is the Collagen-like domain; sequence GYQGPPGPPG…KGEKGYPGIP (63 aa). Residues 53 to 110 form a disordered region; it reads QGPPGPPGPPGIPGNHGNNGNNGATGHEGAKGEKGDKGDLGPRGERGQHGPKGEKGYP. The segment covering 55-64 has biased composition (pro residues); that stretch reads PPGPPGPPGI. The span at 65–74 shows a compositional bias: low complexity; the sequence is PGNHGNNGNN. N70 carries an N-linked (GlcNAc...) asparagine glycan. A compositionally biased stretch (basic and acidic residues) spans 80 to 107; the sequence is EGAKGEKGDKGDLGPRGERGQHGPKGEK. The C1q domain occupies 113–246; it reads PPELQIAFMA…FAGFLLFETK (134 aa).

Glycosylated on Asn-70. Expressed in colon and small intestine.

It localises to the secreted. The chain is Complement C1q tumor necrosis factor-related protein 3 (C1QTNF3) from Homo sapiens (Human).